The following is a 471-amino-acid chain: Coagulation factor IX (471 aa).

Positions 1–28 (MKHLNTVMAESPALITIFLLGYLLSTEC) are cleaved as a signal peptide. Positions 29-46 (AVFLDRENATKILTRPKR) are excised as a propeptide. 11 residues coordinate Ca(2+): Tyr47, Asn48, Glu53, Glu54, Glu61, Glu63, Glu66, Glu67, Glu72, Glu73, and Glu76. Residues 47–92 (YNSGKLEEFVRGNLERECIEERCSFEEAREVFENTEKTTEFWKQYV) form the Gla domain. Glu53, Glu54, Glu61, Glu63, Glu66, Glu67, Glu72, Glu73, Glu76, Glu79, and Glu82 each carry 4-carboxyglutamate. Glu61 contacts Mg(2+). The cysteines at positions 64 and 69 are disulfide-linked. Residue Glu66 participates in Mg(2+) binding. A Mg(2+)-binding site is contributed by Glu72. Position 76 (Glu76) interacts with Mg(2+). Glu82 is a Ca(2+) binding site. Glu82 serves as a coordination point for Mg(2+). An O-linked (GalNAc...) threonine glycan is attached at Thr85. 4 residues coordinate Ca(2+): Glu86, Asp93, Gly94, and Gln96. The residue at position 86 (Glu86) is a 4-carboxyglutamate. Glu86 is a binding site for Mg(2+). One can recognise an EGF-like 1; calcium-binding domain in the interval 93–129 (DGDQCESNPCLNGGICKDDISSYECWCQVGFEGRNCE). 10 disulfides stabilise this stretch: Cys97–Cys108, Cys102–Cys117, Cys119–Cys128, Cys134–Cys145, Cys141–Cys155, Cys157–Cys170, Cys178–Cys345, Cys262–Cys278, Cys392–Cys406, and Cys417–Cys445. The O-linked (Glc...) serine glycan is linked to Ser99. Ca(2+) contacts are provided by Asp110 and Asp111. (3R)-3-hydroxyaspartate is present on Asp110. A Phosphoserine modification is found at Ser114. The EGF-like 2 domain maps to 130-171 (LDATCNIKNGRCKQFCKNSPDNKVICSCTEGYQLAEDQKSCE). Positions 193–236 (AETVFSNMDYENSTEAVFIQDDITDGAILNNVTESSESLNDFTR) are cleaved as a propeptide — activation peptide. Tyr202 carries the post-translational modification Sulfotyrosine. Asn204 carries an N-linked (GlcNAc...) asparagine glycan. A Phosphoserine modification is found at Ser205. Residue Thr206 is modified to Phosphothreonine; alternate. An O-linked (GalNAc...) threonine; alternate glycan is attached at Thr206. N-linked (GlcNAc...) asparagine glycosylation occurs at Asn223. O-linked (GalNAc...) threonine glycosylation is found at Thr225 and Thr235. The 233-residue stretch at 237–469 (VVGGENAKPG…YVNWIKEKTK (233 aa)) folds into the Peptidase S1 domain. The active-site Charge relay system is His277. Residues Glu291, Asn293, Glu298, and Glu301 each contribute to the Ca(2+) site. Residue Asp325 is the Charge relay system of the active site. The active-site Charge relay system is the Ser421.

This sequence belongs to the peptidase S1 family. As to quaternary structure, heterodimer of a light chain and a heavy chain; disulfide-linked. Interacts (inactive and activated) with F11 (activated) in calcium-dependent manner. Interacts with SERPINC1. In terms of processing, activated by factor XIa, which excises the activation peptide. The propeptide can also be removed by snake venom protease. Activated by coagulation factor VIIa-tissue factor (F7-F3) complex in calcium-dependent manner. The iron and 2-oxoglutarate dependent 3-hydroxylation of aspartate and asparagine is (R) stereospecific within EGF domains. Post-translationally, predominantly O-glucosylated at Ser-99 by POGLUT1 in vitro. Detected in liver.

It localises to the secreted. The enzyme catalyses Selective cleavage of Arg-|-Ile bond in factor X to form factor Xa.. Functionally, factor IX is a vitamin K-dependent plasma protein that participates in the intrinsic pathway of blood coagulation by converting factor X to its active form in the presence of Ca(2+) ions, phospholipids, and factor VIIIa. The chain is Coagulation factor IX (F9) from Mus musculus (Mouse).